We begin with the raw amino-acid sequence, 125 residues long: Ribosome-binding factor A (125 aa).

The protein belongs to the RbfA family. Monomer. Binds 30S ribosomal subunits, but not 50S ribosomal subunits or 70S ribosomes.

The protein localises to the cytoplasm. Functionally, one of several proteins that assist in the late maturation steps of the functional core of the 30S ribosomal subunit. Associates with free 30S ribosomal subunits (but not with 30S subunits that are part of 70S ribosomes or polysomes). Required for efficient processing of 16S rRNA. May interact with the 5'-terminal helix region of 16S rRNA. The chain is Ribosome-binding factor A from Akkermansia muciniphila (strain ATCC BAA-835 / DSM 22959 / JCM 33894 / BCRC 81048 / CCUG 64013 / CIP 107961 / Muc).